Here is a 2228-residue protein sequence, read N- to C-terminus: Genome polyprotein (2228 aa).

The segment at 55–76 (TAEVGSHQPEPLKTSVDKPGSK) is disordered. 2 consecutive short sequence motifs ((L)YPX(n)L motif) follow at residues 167-171 (YPHGL) and 200-205 (YPVWEL). The interval 766-836 (MMDRIALGDL…PRKIKGVFSQ (71 aa)) is involved in P1-2A pentamerization. A helical transmembrane segment spans residues 1011–1031 (TVEIINTVLCFVKSGILLYVI). The interval 1043–1070 (IGLLRVMNYADIGCSVISCGKVFSKMLE) is membrane-penetrating ability. Residues 1127-1153 (NKKDVLNILKDHQQKIERAIEEADNFC) are a coiled coil. One can recognise an SF3 helicase domain in the interval 1204–1366 (HQKLKNLGSI…SFFKNPHNDM (163 aa)). 1230-1237 (GKRGGGKS) contributes to the ATP binding site. The chain crosses the membrane as a helical span at residues 1462–1482 (WVAVGAAVGVLGVLVGGWYVY). Tyrosine 1499 is subject to O-(5'-phospho-RNA)-tyrosine. The 215-residue stretch at 1514-1728 (DPVESQSTLE…VAKLVTQEMF (215 aa)) folds into the Peptidase C3 domain. Residues histidine 1563, aspartate 1603, and cysteine 1691 each act as for protease 3C activity in the active site. The RdRp catalytic domain occupies 1977-2098 (DVGLDLDFSA…VFSRQVQIDN (122 aa)).

Belongs to the picornaviridae polyprotein family. As to quaternary structure, homodimer. Homomultimer; probably interacts with membranes in a multimeric form. Seems to assemble into amyloid-like fibers. Homodimer. Monomer. Interacts with protein 3CD. In terms of assembly, interacts with host ACBD3. As to quaternary structure, interacts with protein 3AB. Interacts with human MAVS. In terms of assembly, homodimer; disulfide-linked. As to quaternary structure, homopentamer. Homooligomer. Interacts with capsid protein VP2. Interacts with capsid protein VP3. In terms of assembly, interacts with capsid protein VP1. Interacts with capsid protein VP3. As to quaternary structure, interacts with capsid protein VP1. Interacts with capsid protein VP2. In terms of processing, specific enzymatic cleavages by viral protease in vivo yield a variety of precursors and mature proteins. Polyprotein processing intermediates are produced, such as P1-2A which is a functional precursor of the structural proteins, VP0 which is a VP4-VP2 precursor, VP1-2A precursor, 3ABC precursor which is a stable and catalytically active precursor of 3A, 3B and 3C proteins, 3AB and 3CD precursors. The assembly signal 2A is removed from VP1-2A by a host protease, possibly host Cathepsin L. This cleavage occurs over a region of 3 amino-acids probably generating VP1 proteins with heterogeneous C-termini. During virion maturation, immature virions are rendered infectious following cleavage of VP0 into VP4 and VP2. This maturation seems to be an autocatalytic event triggered by the presence of RNA in the capsid and is followed by a conformational change of the particle. Post-translationally, the assembly signal 2A is removed from VP1-2A by a host protease, possibly host Cathepsin L in naked virions. This cleavage does not occur in enveloped virions. This cleavage occurs over a region of 3 amino-acids probably generating VP1 proteins with heterogeneous C-termini. In terms of processing, VPg is uridylylated prior to priming replication into VPg-pUpU. Unlike other picornaviruses, does not seem to be myristoylated.

It is found in the virion. The protein resides in the host endosome. Its subcellular location is the host multivesicular body. The protein localises to the host membrane. It localises to the host mitochondrion outer membrane. It is found in the host cytoplasm. The protein resides in the host cytoplasmic vesicle membrane. It catalyses the reaction RNA(n) + a ribonucleoside 5'-triphosphate = RNA(n+1) + diphosphate. The enzyme catalyses a ribonucleoside 5'-triphosphate + H2O = a ribonucleoside 5'-diphosphate + phosphate + H(+). It carries out the reaction Selective cleavage of Gln-|-Gly bond in the poliovirus polyprotein. In other picornavirus reactions Glu may be substituted for Gln, and Ser or Thr for Gly.. Capsid proteins VP1, VP2, and VP3 form a closed capsid enclosing the viral positive strand RNA genome. All these proteins contain a beta-sheet structure called beta-barrel jelly roll. Together they form an icosahedral capsid (T=3) composed of 60 copies of each VP1, VP2, and VP3, with a diameter of approximately 300 Angstroms. VP1 is situated at the 12 fivefold axes, whereas VP2 and VP3 are located at the quasi-sixfold axes. The naked capsid interacts with the host receptor HAVCR1 to provide virion attachment to and probably entry into the target cell. Its function is as follows. VP0 precursor is a component of the immature procapsids. In terms of biological role, plays a role in the assembly of the 12 pentamers into an icosahedral structure. Has not been detected in mature virions, supposedly owing to its small size. Functionally, precursor component of immature procapsids that corresponds to an extended form of the structural protein VP1. After maturation, possibly by the host Cathepsin L, the assembly signal 2A is cleaved to give rise to the mature VP1 protein. Functions as a viroporin. Affects membrane integrity and causes an increase in membrane permeability. Involved in host intracellular membrane rearrangements probably to give rise to the viral factories. Does not disrupt calcium homeostasis or glycoprotein trafficking. Antagonizes the innate immune response of the host by suppressing IFN-beta synthesis, which it achieves by interfering with the RIG-I/IFIH1 pathway. Its function is as follows. Affects membrane integrity and causes an increase in membrane permeability. In terms of biological role, associates with and induces structural rearrangements of intracellular membranes. Displays RNA-binding activity. Functionally, the precursor 3ABC is targeted to the mitochondrial membrane where protease 3C activity cleaves and inhibits the host antiviral protein MAVS, thereby disrupting activation of IRF3 through the IFIH1/MDA5 pathway. In vivo, the protease activity of 3ABC precursor is more efficient in cleaving the 2BC precursor than that of protein 3C. The 3ABC precursor may therefore play a role in the proteolytic processing of the polyprotein. Possible viroporin. Interacts with the 3CD precursor and with RNA structures found at both the 5'- and 3'-termini of the viral genome. Since the 3AB precursor contains the hydrophobic domain 3A, it probably anchors the whole viral replicase complex to intracellular membranes on which viral RNA synthesis occurs. Its function is as follows. May serve as membrane anchor to the 3AB and 3ABC precursors via its hydrophobic domain. May interact with RNA. In terms of biological role, acts as a primer for viral RNA replication and remains covalently bound to viral genomic RNA. VPg is uridylylated prior to priming replication into VPg-pUpU. The VPg-pUpU is then used as primer on the genomic RNA poly(A) by the RNA-dependent RNA polymerase to replicate the viral genome. Functionally, cysteine protease that generates mature viral proteins from the precursor polyprotein. In addition to its proteolytic activity, it binds to viral RNA, and thus influences viral genome replication. RNA and substrate bind cooperatively to the protease. Cleaves IKBKG/NEMO to impair innate immune signaling. Cleaves host PABPC1 which may participate in the switch of viral translation to RNA synthesis. Interacts with the 3AB precursor and with RNA structures found at both the 5'- and 3'-termini of the viral genome. Disrupts TLR3 signaling by degrading the host adapter protein TICAM1/TRIF. Its function is as follows. RNA-directed RNA polymerase 3D-POL replicates genomic and antigenomic RNA by recognizing replications specific signals. The polypeptide is Genome polyprotein (Human hepatitis A virus genotype IIIA (isolate NOR-21) (HHAV)).